The primary structure comprises 501 residues: Ribose import ATP-binding protein RbsA (501 aa).

2 ABC transporter domains span residues 5–241 and 252–495; these read LQLK…VGRK and APGE…VGKL. 37–44 is an ATP binding site; sequence GENGAGKS.

It belongs to the ABC transporter superfamily. Ribose importer (TC 3.A.1.2.1) family. The complex is composed of an ATP-binding protein (RbsA), two transmembrane proteins (RbsC) and a solute-binding protein (RbsB).

The protein resides in the cell inner membrane. It carries out the reaction D-ribose(out) + ATP + H2O = D-ribose(in) + ADP + phosphate + H(+). In terms of biological role, part of the ABC transporter complex RbsABC involved in ribose import. Responsible for energy coupling to the transport system. The sequence is that of Ribose import ATP-binding protein RbsA from Salmonella typhi.